Reading from the N-terminus, the 154-residue chain is Large ribosomal subunit protein uL13 (154 aa).

A disordered region spans residues 129–154 (SQHPHEAQQPEALDVGTLNRKNKRIA).

It belongs to the universal ribosomal protein uL13 family. In terms of assembly, part of the 50S ribosomal subunit.

Its function is as follows. This protein is one of the early assembly proteins of the 50S ribosomal subunit, although it is not seen to bind rRNA by itself. It is important during the early stages of 50S assembly. The polypeptide is Large ribosomal subunit protein uL13 (Bartonella bacilliformis (strain ATCC 35685 / KC583 / Herrer 020/F12,63)).